We begin with the raw amino-acid sequence, 307 residues long: Small ribosomal subunit biogenesis GTPase RsgA (307 aa).

Residues Arg85–Phe242 form the CP-type G domain. GTP is bound by residues Asn135 to Asp138 and Gly184 to Thr192. Residues Cys266, Cys271, His273, and Cys279 each coordinate Zn(2+).

It belongs to the TRAFAC class YlqF/YawG GTPase family. RsgA subfamily. In terms of assembly, monomer. Associates with 30S ribosomal subunit, binds 16S rRNA. Zn(2+) serves as cofactor.

Its subcellular location is the cytoplasm. Its function is as follows. One of several proteins that assist in the late maturation steps of the functional core of the 30S ribosomal subunit. Helps release RbfA from mature subunits. May play a role in the assembly of ribosomal proteins into the subunit. Circularly permuted GTPase that catalyzes slow GTP hydrolysis, GTPase activity is stimulated by the 30S ribosomal subunit. The polypeptide is Small ribosomal subunit biogenesis GTPase RsgA (Neisseria meningitidis serogroup C (strain 053442)).